A 1316-amino-acid chain; its full sequence is DNA-directed RNA polymerase subunit beta' (1316 aa).

4 residues coordinate Zn(2+): Cys-60, Cys-62, Cys-75, and Cys-78. 3 residues coordinate Mg(2+): Asp-535, Asp-537, and Asp-539. The Zn(2+) site is built by Cys-891, Cys-968, Cys-975, and Cys-978.

It belongs to the RNA polymerase beta' chain family. The RNAP catalytic core consists of 2 alpha, 1 beta, 1 beta' and 1 omega subunit. When a sigma factor is associated with the core the holoenzyme is formed, which can initiate transcription. It depends on Mg(2+) as a cofactor. The cofactor is Zn(2+).

It carries out the reaction RNA(n) + a ribonucleoside 5'-triphosphate = RNA(n+1) + diphosphate. Functionally, DNA-dependent RNA polymerase catalyzes the transcription of DNA into RNA using the four ribonucleoside triphosphates as substrates. The sequence is that of DNA-directed RNA polymerase subunit beta' from Mycobacterium leprae (strain Br4923).